The sequence spans 61 residues: Large ribosomal subunit protein bL32 (61 aa).

Basic residues predominate over residues 1–10 (MAQPKKKTSN). Residues 1–23 (MAQPKKKTSNAKRDQRRATWKRK) form a disordered region.

This sequence belongs to the bacterial ribosomal protein bL32 family.

This is Large ribosomal subunit protein bL32 from Gloeobacter violaceus (strain ATCC 29082 / PCC 7421).